Here is a 90-residue protein sequence, read N- to C-terminus: UPF0298 protein BLi01717/BL02989 (90 aa).

This sequence belongs to the UPF0298 family.

It is found in the cytoplasm. This Bacillus licheniformis (strain ATCC 14580 / DSM 13 / JCM 2505 / CCUG 7422 / NBRC 12200 / NCIMB 9375 / NCTC 10341 / NRRL NRS-1264 / Gibson 46) protein is UPF0298 protein BLi01717/BL02989.